Here is a 136-residue protein sequence, read N- to C-terminus: Large ribosomal subunit protein bL17 (136 aa).

The protein belongs to the bacterial ribosomal protein bL17 family. Part of the 50S ribosomal subunit. Contacts protein L32.

In Rhodopseudomonas palustris (strain BisA53), this protein is Large ribosomal subunit protein bL17.